Here is a 328-residue protein sequence, read N- to C-terminus: Arabinose 5-phosphate isomerase KdsD (328 aa).

The SIS domain occupies 41 to 184 (ACEKMFNCTG…AVALLKARGF (144 aa)). Residues 75–76 (GT), His-82, His-88, 114–123 (ALIPVLKRLH), and 148–150 (KVP) contribute to the substrate site. Zn(2+) is bound at residue His-82. One can recognise a CBS 1 domain in the interval 210-268 (MHTGDEIPHVNKHATLRDALLEITRKNLGMTVICDESMKIDGIFTDGDLRRMFDMGGDM). Glu-275 provides a ligand contact to substrate. A CBS 2 domain is found at 277–328 (MTPGGIRVRPGILAVDALNLMQSRHITSVLVADGDQLLGVLHMHDLLRAGVV).

Belongs to the SIS family. GutQ/KpsF subfamily. As to quaternary structure, homotetramer.

It catalyses the reaction D-arabinose 5-phosphate = D-ribulose 5-phosphate. The protein operates within carbohydrate biosynthesis; 3-deoxy-D-manno-octulosonate biosynthesis; 3-deoxy-D-manno-octulosonate from D-ribulose 5-phosphate: step 1/3. Its pathway is bacterial outer membrane biogenesis; lipopolysaccharide biosynthesis. Functionally, involved in the biosynthesis of 3-deoxy-D-manno-octulosonate (KDO), a unique 8-carbon sugar component of lipopolysaccharides (LPSs). Catalyzes the reversible aldol-ketol isomerization between D-ribulose 5-phosphate (Ru5P) and D-arabinose 5-phosphate (A5P). The sequence is that of Arabinose 5-phosphate isomerase KdsD (kdsD) from Salmonella typhi.